The sequence spans 277 residues: Inositol monophosphatase 1 (277 aa).

The Mg(2+) site is built by glutamate 70, aspartate 90, isoleucine 92, and aspartate 93. Glutamate 70 serves as a coordination point for substrate. Isoleucine 92 to threonine 95 provides a ligand contact to substrate. Phosphothreonine is present on threonine 168. Residues glycine 194–alanine 196, glutamate 213, and aspartate 220 contribute to the substrate site. Aspartate 220 contacts Mg(2+).

It belongs to the inositol monophosphatase superfamily. In terms of assembly, homodimer. It depends on Mg(2+) as a cofactor.

It localises to the cytoplasm. It catalyses the reaction a myo-inositol phosphate + H2O = myo-inositol + phosphate. It carries out the reaction 1D-myo-inositol 1-phosphate + H2O = myo-inositol + phosphate. The enzyme catalyses 1D-myo-inositol 2-phosphate + H2O = myo-inositol + phosphate. The catalysed reaction is 1D-myo-inositol 3-phosphate + H2O = myo-inositol + phosphate. It catalyses the reaction 1D-myo-inositol 4-phosphate + H2O = myo-inositol + phosphate. It carries out the reaction 1D-myo-inositol 5-phosphate + H2O = myo-inositol + phosphate. The enzyme catalyses 1D-myo-inositol 6-phosphate + H2O = myo-inositol + phosphate. The catalysed reaction is scyllo-inositol 1-phosphate + H2O = scyllo-inositol + phosphate. It catalyses the reaction alpha-D-galactose 1-phosphate + H2O = D-galactose + phosphate. It carries out the reaction alpha-D-glucose 1-phosphate + H2O = D-glucose + phosphate. The enzyme catalyses D-glucose 6-phosphate + H2O = D-glucose + phosphate. The catalysed reaction is beta-D-fructose 1-phosphate + H2O = D-fructose + phosphate. It catalyses the reaction glycerol 2-phosphate + H2O = glycerol + phosphate. It carries out the reaction adenosine 2'-phosphate + H2O = adenosine + phosphate. The protein operates within polyol metabolism; myo-inositol biosynthesis; myo-inositol from D-glucose 6-phosphate: step 2/2. Its activity is regulated as follows. Inhibited by Li(+), Ca(2+) and Mn(2+), but also by Mg(2+) at concentrations above 3 mM. In terms of biological role, phosphatase involved in the dephosphorylation of myo-inositol monophosphate to generate myo-inositol. Is also able to dephosphorylate scyllo-inositol-phosphate, myo-inositol 1,4-diphosphate, scyllo-inositol-1,3-diphosphate and scyllo-inositol-1,4-diphosphate. Also dephosphorylates in vitro other sugar-phosphates including D-galactose-1-phosphate, glucose-1-phosphate, glucose-6-phosphate, fructose-1-phosphate, beta-glycerophosphate and 2'-AMP. Responsible for the provision of inositol required for synthesis of phosphatidylinositol and polyphosphoinositides, and involved in maintaining normal brain function. Has been implicated as the pharmacological target for lithium Li(+) action in brain. In Pongo abelii (Sumatran orangutan), this protein is Inositol monophosphatase 1 (IMPA1).